An 86-amino-acid polypeptide reads, in one-letter code: Small ribosomal subunit protein bS20 (86 aa).

The tract at residues 1–25 is disordered; the sequence is MANIKSQMKRIRTNEAARKRNQSVK.

It belongs to the bacterial ribosomal protein bS20 family.

Its function is as follows. Binds directly to 16S ribosomal RNA. The polypeptide is Small ribosomal subunit protein bS20 (Nocardia farcinica (strain IFM 10152)).